A 105-amino-acid polypeptide reads, in one-letter code: Serine protease inhibitor Kazal-type 6 (105 aa).

An N-terminal signal peptide occupies residues 1–23 (MKVAGVFLLLSLALLCFFSGEFS). Position 24 is a pyrrolidone carboxylic acid (Gln-24). Residues 49-105 (RLFQINCGEFRDPKVFCTRESDPLCGSDGQTYGNKCAFCKALEKSSGKINLKHRGKC) enclose the Kazal-like domain. 3 disulfide bridges follow: Cys-55–Cys-87, Cys-65–Cys-84, and Cys-73–Cys-105.

It is found in the secreted. Serine protease inhibitor selective for kallikreins. Efficiently inhibits KLK4, KLK5, KLK6, KLK7, KLK12, KLK13 and KLK14. Doesn't inhibit KLK8. The sequence is that of Serine protease inhibitor Kazal-type 6 (Spink6) from Rattus norvegicus (Rat).